We begin with the raw amino-acid sequence, 397 residues long: DNA-directed RNA polymerase subunit Rpo1C (397 aa).

It belongs to the RNA polymerase beta' chain family. Part of the RNA polymerase complex.

The protein resides in the cytoplasm. It carries out the reaction RNA(n) + a ribonucleoside 5'-triphosphate = RNA(n+1) + diphosphate. DNA-dependent RNA polymerase (RNAP) catalyzes the transcription of DNA into RNA using the four ribonucleoside triphosphates as substrates. Forms part of the jaw domain. The polypeptide is DNA-directed RNA polymerase subunit Rpo1C (Pyrococcus horikoshii (strain ATCC 700860 / DSM 12428 / JCM 9974 / NBRC 100139 / OT-3)).